We begin with the raw amino-acid sequence, 268 residues long: MTSIKFYQSFSAHLVQHSPWPILVSFSLFNLAIGTVLTMHGYSHSSTTFDLGLAVTVGSILLWTRDIVIEGSFLGDHTKQVQEGLIIGFILFIISEVFAFISVFWAYFHSALSPAVELGSTWPPVGIIPLDTFSLPLFNTIILLSSGAFVTYGHHAIFSGKRLDSIIGLFLTVALALIFSYFQAFEYIHAGFSMSDSVFGTVFFASTGLHGIHVMLGTLFLFVSFLRQVNYQTTKEHNIGLETSILYWHFVDLVWLFLFLVVYFWGGA.

The next 7 helical transmembrane spans lie at 19–39 (PWPI…VLTM), 49–69 (FDLG…DIVI), 85–105 (LIIG…SVFW), 124–144 (PVGI…IILL), 165–185 (SIIG…FQAF), 202–222 (VFFA…LFLF), and 245–265 (ILYW…VYFW).

Belongs to the cytochrome c oxidase subunit 3 family. As to quaternary structure, component of the cytochrome c oxidase (complex IV, CIV), a multisubunit enzyme composed of a catalytic core of 3 subunits and several supernumerary subunits. The complex exists as a monomer or a dimer and forms supercomplexes (SCs) in the inner mitochondrial membrane with ubiquinol-cytochrome c oxidoreductase (cytochrome b-c1 complex, complex III, CIII).

Its subcellular location is the mitochondrion inner membrane. The catalysed reaction is 4 Fe(II)-[cytochrome c] + O2 + 8 H(+)(in) = 4 Fe(III)-[cytochrome c] + 2 H2O + 4 H(+)(out). Functionally, component of the cytochrome c oxidase, the last enzyme in the mitochondrial electron transport chain which drives oxidative phosphorylation. The respiratory chain contains 3 multisubunit complexes succinate dehydrogenase (complex II, CII), ubiquinol-cytochrome c oxidoreductase (cytochrome b-c1 complex, complex III, CIII) and cytochrome c oxidase (complex IV, CIV), that cooperate to transfer electrons derived from NADH and succinate to molecular oxygen, creating an electrochemical gradient over the inner membrane that drives transmembrane transport and the ATP synthase. Cytochrome c oxidase is the component of the respiratory chain that catalyzes the reduction of oxygen to water. Electrons originating from reduced cytochrome c in the intermembrane space (IMS) are transferred via the dinuclear copper A center (CU(A)) of subunit 2 and heme A of subunit 1 to the active site in subunit 1, a binuclear center (BNC) formed by heme A3 and copper B (CU(B)). The BNC reduces molecular oxygen to 2 water molecules using 4 electrons from cytochrome c in the IMS and 4 protons from the mitochondrial matrix. The chain is Cytochrome c oxidase subunit 3 (COIII) from Schizophyllum commune (Split gill fungus).